Here is a 126-residue protein sequence, read N- to C-terminus: Ribosome-binding factor A (126 aa).

Belongs to the RbfA family. In terms of assembly, monomer. Binds 30S ribosomal subunits, but not 50S ribosomal subunits or 70S ribosomes.

It is found in the cytoplasm. Functionally, one of several proteins that assist in the late maturation steps of the functional core of the 30S ribosomal subunit. Associates with free 30S ribosomal subunits (but not with 30S subunits that are part of 70S ribosomes or polysomes). Required for efficient processing of 16S rRNA. May interact with the 5'-terminal helix region of 16S rRNA. This Thermosynechococcus vestitus (strain NIES-2133 / IAM M-273 / BP-1) protein is Ribosome-binding factor A.